A 445-amino-acid chain; its full sequence is Trigger factor (445 aa).

One can recognise a PPIase FKBP-type domain in the interval 162-247; that stretch reads GDQITMDAVG…VKAVHTAEPT (86 aa).

This sequence belongs to the FKBP-type PPIase family. Tig subfamily.

The protein localises to the cytoplasm. It carries out the reaction [protein]-peptidylproline (omega=180) = [protein]-peptidylproline (omega=0). Its function is as follows. Involved in protein export. Acts as a chaperone by maintaining the newly synthesized protein in an open conformation. Functions as a peptidyl-prolyl cis-trans isomerase. The polypeptide is Trigger factor (Rickettsia bellii (strain OSU 85-389)).